Reading from the N-terminus, the 210-residue chain is Somatotropin-1 (210 aa).

Positions 1 to 22 (MGQVFLLMPVLLASCFLSQGAA) are cleaved as a signal peptide. A Zn(2+)-binding site is contributed by histidine 38. Cysteines 71 and 183 form a disulfide. Position 192 (glutamate 192) interacts with Zn(2+). A disulfide bond links cysteine 200 and cysteine 208.

It belongs to the somatotropin/prolactin family.

The protein localises to the secreted. Functionally, growth hormone plays an important role in growth control and is involved in the regulation of several anabolic processes. Implicated as an osmoregulatory substance important for seawater adaptation. The polypeptide is Somatotropin-1 (gh1) (Oncorhynchus nerka (Sockeye salmon)).